Here is a 229-residue protein sequence, read N- to C-terminus: Matrix protein (229 aa).

The dynamin binding motif lies at 2-4; that stretch reads KSI. The interval 11-36 is disordered; it reads AKKEKKREKKSNHGSHSMEWESPPSY. Over residues 13–23 the composition is skewed to basic residues; the sequence is KEKKREKKSNH. The PPXY motif motif lies at 33–36; it reads PPSY. Positions 42 to 45 match the PTAP/PSAP motif motif; the sequence is PSAP.

It belongs to the vesiculoviruses matrix protein family. In terms of assembly, homomultimer. Interacts with viral nucleocapsid; this interaction contributes to the virion assembly. Interacts with the viral envelope glycoprotein; this interaction contributes to the virion assembly. Interacts with host RAE1-NUP98 complex. Interacts with host NEDD4 and TSG101. Interacts with host dynamin. Interacts with host NDUFAF4; the interaction inhibits viral propagation and is independent of interferon activation. Interacts with host GTF2H5; the interaction may inhibit host transcription. Phosphorylated by host.

Its subcellular location is the virion. It localises to the host endomembrane system. The protein localises to the host nucleus membrane. The protein resides in the host nucleus. It is found in the host cytoplasm. Its function is as follows. Forms a double layer around the helical nucleocapsid, the inner matrix layer binding to the N helix and the outer matrix layer binding to the envelope glycoprotein. Plays a major role in assembly and budding of virion, by recruiting cellular partners of the ESCRT complexes that play a key role in releasing the budding particle from the host membrane. Condensates the ribonucleocapsid core during virus assembly. Inhibits the host mRNA nuclear export thereby inducing the shut off of cellular transcription and preventing the interferon signaling and the establishment of antiviral state in infected cells. This shutoff presumably inhibits interferon signaling and thus establishment of antiviral state in virus infected cells. Induces cell-rounding, cytoskeleton disorganization and apoptosis in infected cell. Inhibits host transcription, possibly through interaction with host DNA repair factor IIH/TFIIH GTF2H5 subunit. The protein is Matrix protein (M) of Piry virus (PIRYV).